Here is a 351-residue protein sequence, read N- to C-terminus: sn-1 oleoyl-lipid 12-desaturase (351 aa).

The next 2 helical transmembrane spans lie at 46–66 (WASV…IIYL) and 68–88 (WYCL…AFVV). The short motif at 90-94 (HDCGH) is the Histidine box-1 element. Residues 102–122 (WVNDLVGHIAFAPLIYPFHSW) traverse the membrane as a helical segment. The Histidine box-2 motif lies at 126 to 130 (HDHHH). 2 helical membrane-spanning segments follow: residues 199–219 (IAVV…TTGV) and 222–242 (FVKF…TFTI). The Histidine box-3 signature appears at 290 to 294 (HHLSV).

This sequence belongs to the fatty acid desaturase type 2 family. Fe(2+) serves as cofactor.

The protein resides in the membrane. The enzyme catalyses a 1-[(9Z)-octadecenoyl]-2-acyl-glycerolipid + 2 reduced [2Fe-2S]-[ferredoxin] + O2 + 2 H(+) = a 1-[(9Z,12Z)-octadecdienoyl]-2-acyl-glycerolipid + 2 oxidized [2Fe-2S]-[ferredoxin] + 2 H2O. Its pathway is lipid metabolism; polyunsaturated fatty acid biosynthesis. In terms of biological role, desaturase involved in fatty acid biosynthesis. Introduces a double bond at carbon 12 of oleoyl groups (18:1) attached to the sn-1 position of the glycerol moiety of membrane glycerolipids. This enzyme is involved in chilling tolerance because the phase transition temperature of lipids of cellular membranes depends on the degree of unsaturation of fatty acids of the membrane lipids. This is sn-1 oleoyl-lipid 12-desaturase from Synechocystis sp. (strain ATCC 27184 / PCC 6803 / Kazusa).